The sequence spans 273 residues: Formamidopyrimidine-DNA glycosylase (273 aa).

The active-site Schiff-base intermediate with DNA is the P2. E3 (proton donor) is an active-site residue. K57 functions as the Proton donor; for beta-elimination activity in the catalytic mechanism. Positions 90, 109, and 150 each coordinate DNA. The segment at 235–269 adopts an FPG-type zinc-finger fold; it reads KVYGRAGKECPVCSSKIEEEKIGQRNSFWCGKCQF. R259 (proton donor; for delta-elimination activity) is an active-site residue.

This sequence belongs to the FPG family. In terms of assembly, monomer. It depends on Zn(2+) as a cofactor.

It catalyses the reaction Hydrolysis of DNA containing ring-opened 7-methylguanine residues, releasing 2,6-diamino-4-hydroxy-5-(N-methyl)formamidopyrimidine.. The enzyme catalyses 2'-deoxyribonucleotide-(2'-deoxyribose 5'-phosphate)-2'-deoxyribonucleotide-DNA = a 3'-end 2'-deoxyribonucleotide-(2,3-dehydro-2,3-deoxyribose 5'-phosphate)-DNA + a 5'-end 5'-phospho-2'-deoxyribonucleoside-DNA + H(+). Functionally, involved in base excision repair of DNA damaged by oxidation or by mutagenic agents. Acts as a DNA glycosylase that recognizes and removes damaged bases. Has a preference for oxidized purines, such as 7,8-dihydro-8-oxoguanine (8-oxoG). Has AP (apurinic/apyrimidinic) lyase activity and introduces nicks in the DNA strand. Cleaves the DNA backbone by beta-delta elimination to generate a single-strand break at the site of the removed base with both 3'- and 5'-phosphates. This chain is Formamidopyrimidine-DNA glycosylase, found in Aliivibrio fischeri (strain MJ11) (Vibrio fischeri).